The chain runs to 464 residues: Argininosuccinate lyase (464 aa).

The protein belongs to the lyase 1 family. Argininosuccinate lyase subfamily.

The protein localises to the cytoplasm. It catalyses the reaction 2-(N(omega)-L-arginino)succinate = fumarate + L-arginine. It functions in the pathway amino-acid biosynthesis; L-arginine biosynthesis; L-arginine from L-ornithine and carbamoyl phosphate: step 3/3. The chain is Argininosuccinate lyase from Stutzerimonas stutzeri (strain A1501) (Pseudomonas stutzeri).